The primary structure comprises 118 residues: Small ribosomal subunit protein uS13 (118 aa).

The disordered stretch occupies residues 94 to 118; it reads SLPLRGQRTKTNARTRKGPRKPIKK.

The protein belongs to the universal ribosomal protein uS13 family. In terms of assembly, part of the 30S ribosomal subunit. Forms a loose heterodimer with protein S19. Forms two bridges to the 50S subunit in the 70S ribosome.

In terms of biological role, located at the top of the head of the 30S subunit, it contacts several helices of the 16S rRNA. In the 70S ribosome it contacts the 23S rRNA (bridge B1a) and protein L5 of the 50S subunit (bridge B1b), connecting the 2 subunits; these bridges are implicated in subunit movement. Contacts the tRNAs in the A and P-sites. This Idiomarina loihiensis (strain ATCC BAA-735 / DSM 15497 / L2-TR) protein is Small ribosomal subunit protein uS13.